The primary structure comprises 570 residues: Proline--tRNA ligase (570 aa).

The protein belongs to the class-II aminoacyl-tRNA synthetase family. ProS type 1 subfamily. As to quaternary structure, homodimer.

Its subcellular location is the cytoplasm. It catalyses the reaction tRNA(Pro) + L-proline + ATP = L-prolyl-tRNA(Pro) + AMP + diphosphate. Its function is as follows. Catalyzes the attachment of proline to tRNA(Pro) in a two-step reaction: proline is first activated by ATP to form Pro-AMP and then transferred to the acceptor end of tRNA(Pro). As ProRS can inadvertently accommodate and process non-cognate amino acids such as alanine and cysteine, to avoid such errors it has two additional distinct editing activities against alanine. One activity is designated as 'pretransfer' editing and involves the tRNA(Pro)-independent hydrolysis of activated Ala-AMP. The other activity is designated 'posttransfer' editing and involves deacylation of mischarged Ala-tRNA(Pro). The misacylated Cys-tRNA(Pro) is not edited by ProRS. The polypeptide is Proline--tRNA ligase (Neisseria meningitidis serogroup C / serotype 2a (strain ATCC 700532 / DSM 15464 / FAM18)).